The primary structure comprises 99 residues: Integration host factor subunit alpha (99 aa).

It belongs to the bacterial histone-like protein family. In terms of assembly, heterodimer of an alpha and a beta chain.

This protein is one of the two subunits of integration host factor, a specific DNA-binding protein that functions in genetic recombination as well as in transcriptional and translational control. This Stenotrophomonas maltophilia (strain R551-3) protein is Integration host factor subunit alpha.